The primary structure comprises 94 residues: Integration host factor subunit beta (94 aa).

Belongs to the bacterial histone-like protein family. In terms of assembly, heterodimer of an alpha and a beta chain.

In terms of biological role, this protein is one of the two subunits of integration host factor, a specific DNA-binding protein that functions in genetic recombination as well as in transcriptional and translational control. The protein is Integration host factor subunit beta (ihfB) of Pasteurella multocida (strain Pm70).